Reading from the N-terminus, the 67-residue chain is Small ribosomal subunit protein eS31 (67 aa).

Zn(2+) contacts are provided by Cys-35, Cys-38, Cys-54, and Cys-57. The C4-type zinc-finger motif lies at 35 to 57 (CPRCGSIMAHHMKPLERWACGKC).

The protein belongs to the eukaryotic ribosomal protein eS31 family. In terms of assembly, part of the 30S ribosomal subunit. The cofactor is Zn(2+).

This chain is Small ribosomal subunit protein eS31, found in Sulfolobus acidocaldarius (strain ATCC 33909 / DSM 639 / JCM 8929 / NBRC 15157 / NCIMB 11770).